A 196-amino-acid polypeptide reads, in one-letter code: Putative lipopolysaccharide biosynthesis O-acetyl transferase WbbJ (196 aa).

The protein belongs to the transferase hexapeptide repeat family.

Its pathway is bacterial outer membrane biogenesis; lipopolysaccharide biosynthesis. In terms of biological role, putative O-acetyltransferase that transfers an O-acetyl group to the O antigen. The polypeptide is Putative lipopolysaccharide biosynthesis O-acetyl transferase WbbJ (wbbJ) (Escherichia coli (strain K12)).